We begin with the raw amino-acid sequence, 306 residues long: NAD kinase 1 (306 aa).

The active-site Proton acceptor is aspartate 67. Residues 67–68 (DG), 149–150 (ND), and aspartate 181 each bind NAD(+).

The protein belongs to the NAD kinase family. It depends on a divalent metal cation as a cofactor.

It is found in the cytoplasm. The enzyme catalyses NAD(+) + ATP = ADP + NADP(+) + H(+). In terms of biological role, involved in the regulation of the intracellular balance of NAD and NADP, and is a key enzyme in the biosynthesis of NADP. Catalyzes specifically the phosphorylation on 2'-hydroxyl of the adenosine moiety of NAD to yield NADP. This is NAD kinase 1 from Synechococcus sp. (strain ATCC 27144 / PCC 6301 / SAUG 1402/1) (Anacystis nidulans).